The sequence spans 345 residues: GTPase Obg (345 aa).

Residues 1–159 enclose the Obg domain; sequence MRFIDEASIT…FHLKLELKLL (159 aa). The 170-residue stretch at 160–329 folds into the OBG-type G domain; sequence ADVGIVGLPN…LIQILARQIA (170 aa). GTP contacts are provided by residues 166 to 173, 191 to 195, 213 to 216, 283 to 286, and 310 to 312; these read GLPNAGKS, FTTLT, DIPG, NKID, and SAA. The Mg(2+) site is built by serine 173 and threonine 193.

It belongs to the TRAFAC class OBG-HflX-like GTPase superfamily. OBG GTPase family. In terms of assembly, monomer. The cofactor is Mg(2+).

The protein localises to the cytoplasm. An essential GTPase which binds GTP, GDP and possibly (p)ppGpp with moderate affinity, with high nucleotide exchange rates and a fairly low GTP hydrolysis rate. Plays a role in control of the cell cycle, stress response, ribosome biogenesis and in those bacteria that undergo differentiation, in morphogenesis control. This chain is GTPase Obg, found in Desulforapulum autotrophicum (strain ATCC 43914 / DSM 3382 / VKM B-1955 / HRM2) (Desulfobacterium autotrophicum).